The primary structure comprises 340 residues: Anthranilate phosphoribosyltransferase (340 aa).

5-phospho-alpha-D-ribose 1-diphosphate is bound by residues G79, 82–83, T87, 89–92, 107–115, and S119; these read GD, NIST, and KHGNRAVTG. G79 serves as a coordination point for anthranilate. S91 serves as a coordination point for Mg(2+). N110 lines the anthranilate pocket. R165 serves as a coordination point for anthranilate. Mg(2+) is bound by residues D224 and E225.

The protein belongs to the anthranilate phosphoribosyltransferase family. As to quaternary structure, homodimer. Mg(2+) is required as a cofactor.

It carries out the reaction N-(5-phospho-beta-D-ribosyl)anthranilate + diphosphate = 5-phospho-alpha-D-ribose 1-diphosphate + anthranilate. The protein operates within amino-acid biosynthesis; L-tryptophan biosynthesis; L-tryptophan from chorismate: step 2/5. Its function is as follows. Catalyzes the transfer of the phosphoribosyl group of 5-phosphorylribose-1-pyrophosphate (PRPP) to anthranilate to yield N-(5'-phosphoribosyl)-anthranilate (PRA). In Syntrophomonas wolfei subsp. wolfei (strain DSM 2245B / Goettingen), this protein is Anthranilate phosphoribosyltransferase.